A 644-amino-acid polypeptide reads, in one-letter code: CTP synthase (644 aa).

Residues 300–551 enclose the Glutamine amidotransferase type-1 domain; the sequence is SIAIVGKYTK…LGLILASVDR (252 aa). Catalysis depends on for GATase activity residues Cys-399, His-527, and Glu-529.

Belongs to the CTP synthase family.

It catalyses the reaction UTP + L-glutamine + ATP + H2O = CTP + L-glutamate + ADP + phosphate + 2 H(+). The protein operates within pyrimidine metabolism; CTP biosynthesis via de novo pathway; CTP from UDP: step 2/2. Functionally, catalyzes the ATP-dependent amination of UTP to CTP with either L-glutamine or ammonia as the source of nitrogen. Constitutes the rate-limiting enzyme in the synthesis of cytosine nucleotides. The chain is CTP synthase from Drosophila pseudoobscura pseudoobscura (Fruit fly).